Reading from the N-terminus, the 336-residue chain is Dihydroorotate dehydrogenase (quinone) (336 aa).

FMN-binding positions include 62–66 and T86; that span reads AGLDK. K66 contacts substrate. 111–115 is a binding site for substrate; that stretch reads NRMGF. Positions 139 and 172 each coordinate FMN. Residue N172 coordinates substrate. The active-site Nucleophile is S175. A substrate-binding site is contributed by N177. Residues K217 and T245 each coordinate FMN. 246–247 is a substrate binding site; the sequence is NT. FMN contacts are provided by residues G268, G297, and 318–319; that span reads YS.

This sequence belongs to the dihydroorotate dehydrogenase family. Type 2 subfamily. In terms of assembly, monomer. Requires FMN as cofactor.

The protein localises to the cell membrane. It catalyses the reaction (S)-dihydroorotate + a quinone = orotate + a quinol. Its pathway is pyrimidine metabolism; UMP biosynthesis via de novo pathway; orotate from (S)-dihydroorotate (quinone route): step 1/1. Functionally, catalyzes the conversion of dihydroorotate to orotate with quinone as electron acceptor. This chain is Dihydroorotate dehydrogenase (quinone), found in Vibrio atlanticus (strain LGP32) (Vibrio splendidus (strain Mel32)).